The chain runs to 533 residues: Basal body-orientation factor 1 (533 aa).

Residues 1–30 are disordered; the sequence is MPAKDKRKDKRKDKRKGKNKGKEPKKIIKS. Residues 7–19 are compositionally biased toward basic residues; the sequence is RKDKRKDKRKGKN. The span at 20 to 30 shows a compositional bias: basic and acidic residues; the sequence is KGKEPKKIIKS. 2 coiled-coil regions span residues 34–207 and 246–368; these read AIER…EAEK and LKEA…VEQF. The segment at 277–533 is interaction with MNS1 and ODF2; sequence VKEKIMQLTQ…PQGLQDSDIA (257 aa). A compositionally biased stretch (polar residues) spans 507–517; the sequence is QQAPVSDSNRM. Residues 507-533 form a disordered region; sequence QQAPVSDSNRMVSPDVIPQGLQDSDIA.

It belongs to the BBOF1 family. Interacts with MNS1 and ODF2. As to expression, expressed exclusively in the testis and predominantly expressed in male germ cells.

The protein resides in the cytoplasm. It localises to the cytoskeleton. The protein localises to the cilium basal body. It is found in the flagellum axoneme. In terms of biological role, plays an essential role in sperm motility and male fertility by stabilizing the sperm flagellar axonemal structure. May be required for the stability of ODF2 and MANS1 proteins. Dispensable for the assembly and function of motile cilia. The protein is Basal body-orientation factor 1 of Mus musculus (Mouse).